Reading from the N-terminus, the 210-residue chain is Thiamine-phosphate synthase (210 aa).

4-amino-2-methyl-5-(diphosphooxymethyl)pyrimidine is bound by residues 39 to 43 (QLREK) and Asn71. Mg(2+)-binding residues include Asp72 and Asp91. Ser110 contacts 4-amino-2-methyl-5-(diphosphooxymethyl)pyrimidine. 2-[(2R,5Z)-2-carboxy-4-methylthiazol-5(2H)-ylidene]ethyl phosphate is bound at residue 134–136 (TPT). Residue Lys137 participates in 4-amino-2-methyl-5-(diphosphooxymethyl)pyrimidine binding. Residue Gly163 participates in 2-[(2R,5Z)-2-carboxy-4-methylthiazol-5(2H)-ylidene]ethyl phosphate binding.

It belongs to the thiamine-phosphate synthase family. It depends on Mg(2+) as a cofactor.

The catalysed reaction is 2-[(2R,5Z)-2-carboxy-4-methylthiazol-5(2H)-ylidene]ethyl phosphate + 4-amino-2-methyl-5-(diphosphooxymethyl)pyrimidine + 2 H(+) = thiamine phosphate + CO2 + diphosphate. The enzyme catalyses 2-(2-carboxy-4-methylthiazol-5-yl)ethyl phosphate + 4-amino-2-methyl-5-(diphosphooxymethyl)pyrimidine + 2 H(+) = thiamine phosphate + CO2 + diphosphate. It carries out the reaction 4-methyl-5-(2-phosphooxyethyl)-thiazole + 4-amino-2-methyl-5-(diphosphooxymethyl)pyrimidine + H(+) = thiamine phosphate + diphosphate. It participates in cofactor biosynthesis; thiamine diphosphate biosynthesis; thiamine phosphate from 4-amino-2-methyl-5-diphosphomethylpyrimidine and 4-methyl-5-(2-phosphoethyl)-thiazole: step 1/1. Condenses 4-methyl-5-(beta-hydroxyethyl)thiazole monophosphate (THZ-P) and 2-methyl-4-amino-5-hydroxymethyl pyrimidine pyrophosphate (HMP-PP) to form thiamine monophosphate (TMP). The polypeptide is Thiamine-phosphate synthase (Campylobacter jejuni (strain RM1221)).